Consider the following 329-residue polypeptide: Malate dehydrogenase (329 aa).

Glycine 12–glycine 18 is an NAD(+) binding site. Positions 93 and 99 each coordinate substrate. NAD(+) is bound by residues asparagine 106, glutamine 113, and valine 130–asparagine 132. Residues asparagine 132 and arginine 163 each contribute to the substrate site. The active-site Proton acceptor is histidine 188.

The protein belongs to the LDH/MDH superfamily. MDH type 2 family.

It catalyses the reaction (S)-malate + NAD(+) = oxaloacetate + NADH + H(+). Its function is as follows. Catalyzes the reversible oxidation of malate to oxaloacetate. The chain is Malate dehydrogenase from Streptomyces griseus subsp. griseus (strain JCM 4626 / CBS 651.72 / NBRC 13350 / KCC S-0626 / ISP 5235).